The sequence spans 203 residues: ATP-dependent Clp protease proteolytic subunit (203 aa).

Ser107 serves as the catalytic Nucleophile. His132 is a catalytic residue.

The protein belongs to the peptidase S14 family. Fourteen ClpP subunits assemble into 2 heptameric rings which stack back to back to give a disk-like structure with a central cavity, resembling the structure of eukaryotic proteasomes.

Its subcellular location is the cytoplasm. The catalysed reaction is Hydrolysis of proteins to small peptides in the presence of ATP and magnesium. alpha-casein is the usual test substrate. In the absence of ATP, only oligopeptides shorter than five residues are hydrolyzed (such as succinyl-Leu-Tyr-|-NHMec, and Leu-Tyr-Leu-|-Tyr-Trp, in which cleavage of the -Tyr-|-Leu- and -Tyr-|-Trp bonds also occurs).. Cleaves peptides in various proteins in a process that requires ATP hydrolysis. Has a chymotrypsin-like activity. Plays a major role in the degradation of misfolded proteins. The polypeptide is ATP-dependent Clp protease proteolytic subunit (Shewanella sediminis (strain HAW-EB3)).